Reading from the N-terminus, the 1321-residue chain is MVLTLGESWPVLVGRRFLSLSAADGSDGSHDSWDVERVAEWPWLSGTIRAVSHTDVTKKDLKVCVEFDGESWRKRRWIEVYSLLRRAFLVEHNLVLAERKSPEISERIVQWPAITYKPLLDKAGLGSITSVRFLGDQQRVFLSKDLLKPIQDVNSLRLSLTDNQIVSKEFQALIVKHLDESHLLKGDKNLVGSEVKIYSLDPSTQWFSATVINGNPASKTLQVNCEEIPALKIVDPSLIHVEVVHDNLVTCGNSARIGAVKRKSSENNGTLVSKQAKSCSEASPSMCPVQSVPTTVFKEILLGCTAATPPSKDPRQQSTPQAANSPPNLGAKIPQGCHKQSLPEEISSCLNTKSEALRTKPDVCKAGLLSKSSQIGTGDLKILTEPKGSCTQPKTNTDQENRLESVPQALTGLPKECLPTKASSKAELEIANPPELQKHLEHAPSPSDVSNAPEVKAGVNSDSPNNCSGKKVEPSALACRSQNLKESSVKVDNESCCSRSNNKIQNAPSRKSVLTDPAKLKKLQQSGEAFVQDDSCVNIVAQLPKCRECRLDSLRKDKEQQKDSPVFCRFFHFRRLQFNKHGVLRVEGFLTPNKYDNEAIGLWLPLTKNVVGIDLDTAKYILANIGDHFCQMVISEKEAMSTIEPHRQVAWKRAVKGVREMCDVCDTTIFNLHWVCPRCGFGVCVDCYRMKRKNCQQGAAYKTFSWLKCVKSQIHEPENLMPTQIIPGKALYDVGDIVHSVRAKWGIKANCPCSNRQFKLFSKPASKEDLKQTSLAGEKPTLGAVLQQNPSVLEPAAVGGEAASKPAGSMKPACPASTSPLNWLADLTSGNVNKENKEKQPTMPILKNEIKCLPPLPPLSKSSTVLHTFNSTILTPVSNNNSGFLRNLLNSSTGKTENGLKNTPKILDDIFASLVQNKTTSDLSKRPQGLTIKPSILGFDTPHYWLCDNRLLCLQDPNNKSNWNVFRECWKQGQPVMVSGVHHKLNSELWKPESFRKEFGEQEVDLVNCRTNEIITGATVGDFWDGFEDVPNRLKNEKEPMVLKLKDWPPGEDFRDMMPSRFDDLMANIPLPEYTRRDGKLNLASRLPNYFVRPDLGPKMYNAYGLITPEDRKYGTTNLHLDVSDAANVMVYVGIPKGQCEQEEEVLKTIQDGDSDELTIKRFIEGKEKPGALWHIYAAKDTEKIREFLKKVSEEQGQENPADHDPIHDQSWYLDRSLRKRLHQEYGVQGWAIVQFLGDVVFIPAGAPHQVHNLYSCIKVAEDFVSPEHVKHCFWLTQEFRYLSQTHTNHEDKLQVKNVIYHAVKDAVAMLKASESSFGKP.

2 positions are modified to phosphoserine: Ser264 and Ser325. Disordered regions lie at residues 307–336 (ATPP…IPQG), 383–402 (LTEP…QENR), and 438–472 (KHLE…GKKV). Over residues 316 to 327 (QQSTPQAANSPP) the composition is skewed to polar residues. A Phosphoserine modification is found at Ser445. The C6-type zinc-finger motif lies at 662–687 (CDVCDTTIFNLHWVCPRCGFGVCVDC). Ser766 is modified (phosphoserine). The LXXLL motif motif lies at 885–889 (LRNLL). Lys895 bears the N6-acetyllysine mark. The region spanning 1058–1281 (MPSRFDDLMA…HCFWLTQEFR (224 aa)) is the JmjC domain. Fe cation-binding residues include His1120, Asp1122, and His1249.

It belongs to the JHDM2 histone demethylase family. In terms of assembly, interacts with VRK1. It depends on Fe(2+) as a cofactor.

Its subcellular location is the cytoplasm. It is found in the nucleus. It catalyses the reaction N(6),N(6)-dimethyl-L-lysyl(9)-[histone H3] + 2 2-oxoglutarate + 2 O2 = L-lysyl(9)-[histone H3] + 2 formaldehyde + 2 succinate + 2 CO2. Its function is as follows. Histone demethylase that specifically demethylates 'Lys-9' of histone H3, thereby playing a central role in histone code. Preferentially demethylates mono- and dimethylated H3 'Lys-9' residue, with a preference for dimethylated residue, while it has weak or no activity on trimethylated H3 'Lys-9'. Demethylation of Lys residue generates formaldehyde and succinate. Involved in hormone-dependent transcriptional activation, by participating in recruitment to androgen-receptor target genes, resulting in H3 'Lys-9' demethylation and transcriptional activation. Involved in spermatogenesis by regulating expression of target genes such as PRM1 and TNP1 which are required for packaging and condensation of sperm chromatin. Involved in obesity resistance through regulation of metabolic genes such as PPARA and UCP1. This Homo sapiens (Human) protein is Lysine-specific demethylase 3A (KDM3A).